A 434-amino-acid chain; its full sequence is Serine hydroxymethyltransferase (434 aa).

120-122 (GHI) provides a ligand contact to (6S)-5,6,7,8-tetrahydrofolate. At lysine 236 the chain carries N6-(pyridoxal phosphate)lysine. Glutamate 255 lines the (6S)-5,6,7,8-tetrahydrofolate pocket.

This sequence belongs to the SHMT family. Homodimer. Pyridoxal 5'-phosphate is required as a cofactor.

The protein localises to the cytoplasm. The protein operates within amino-acid biosynthesis; glycine biosynthesis; glycine from L-serine: step 1/1. Its function is as follows. Catalyzes the reversible interconversion of serine and glycine with a modified folate serving as the one-carbon carrier. Also exhibits a pteridine-independent aldolase activity toward beta-hydroxyamino acids, producing glycine and aldehydes, via a retro-aldol mechanism. This chain is Serine hydroxymethyltransferase, found in Korarchaeum cryptofilum (strain OPF8).